We begin with the raw amino-acid sequence, 110 residues long: Hydrogenase maturation factor HypA (110 aa).

Position 2 (His-2) interacts with Ni(2+). Residues Cys-70, Cys-73, Cys-86, and Cys-89 each coordinate Zn(2+).

This sequence belongs to the HypA/HybF family.

Functionally, involved in the maturation of [NiFe] hydrogenases. Required for nickel insertion into the metal center of the hydrogenase. The polypeptide is Hydrogenase maturation factor HypA (Geobacter metallireducens (strain ATCC 53774 / DSM 7210 / GS-15)).